Consider the following 354-residue polypeptide: Heat-inducible transcription repressor HrcA (354 aa).

It belongs to the HrcA family.

In terms of biological role, negative regulator of class I heat shock genes (grpE-dnaK-dnaJ and groELS operons). Prevents heat-shock induction of these operons. The protein is Heat-inducible transcription repressor HrcA of Novosphingobium aromaticivorans (strain ATCC 700278 / DSM 12444 / CCUG 56034 / CIP 105152 / NBRC 16084 / F199).